A 452-amino-acid chain; its full sequence is Xaa-Pro dipeptidase 1 (452 aa).

5 residues coordinate Mn(2+): Asp247, Asp258, His338, Glu383, and Glu422.

It belongs to the peptidase M24B family. Bacterial-type prolidase subfamily. The cofactor is Mn(2+).

It carries out the reaction Xaa-L-Pro dipeptide + H2O = an L-alpha-amino acid + L-proline. Functionally, splits dipeptides with a prolyl residue in the C-terminal position. The protein is Xaa-Pro dipeptidase 1 of Idiomarina loihiensis (strain ATCC BAA-735 / DSM 15497 / L2-TR).